The sequence spans 328 residues: D-cysteine desulfhydrase (328 aa).

Residue Lys51 is modified to N6-(pyridoxal phosphate)lysine.

The protein belongs to the ACC deaminase/D-cysteine desulfhydrase family. In terms of assembly, homodimer. Requires pyridoxal 5'-phosphate as cofactor.

The enzyme catalyses D-cysteine + H2O = hydrogen sulfide + pyruvate + NH4(+) + H(+). Its function is as follows. Catalyzes the alpha,beta-elimination reaction of D-cysteine and of several D-cysteine derivatives. It could be a defense mechanism against D-cysteine. The protein is D-cysteine desulfhydrase of Shigella flexneri serotype 5b (strain 8401).